A 357-amino-acid polypeptide reads, in one-letter code: Phosphoribosylformylglycinamidine cyclo-ligase (357 aa).

Belongs to the AIR synthase family.

Its subcellular location is the cytoplasm. It carries out the reaction 2-formamido-N(1)-(5-O-phospho-beta-D-ribosyl)acetamidine + ATP = 5-amino-1-(5-phospho-beta-D-ribosyl)imidazole + ADP + phosphate + H(+). The protein operates within purine metabolism; IMP biosynthesis via de novo pathway; 5-amino-1-(5-phospho-D-ribosyl)imidazole from N(2)-formyl-N(1)-(5-phospho-D-ribosyl)glycinamide: step 2/2. This is Phosphoribosylformylglycinamidine cyclo-ligase from Nitrobacter winogradskyi (strain ATCC 25391 / DSM 10237 / CIP 104748 / NCIMB 11846 / Nb-255).